The following is a 182-amino-acid chain: Large ribosomal subunit protein uL5 (182 aa).

The protein belongs to the universal ribosomal protein uL5 family. In terms of assembly, part of the 50S ribosomal subunit; part of the 5S rRNA/L5/L18/L25 subcomplex. Contacts the 5S rRNA and the P site tRNA. Forms a bridge to the 30S subunit in the 70S ribosome.

In terms of biological role, this is one of the proteins that bind and probably mediate the attachment of the 5S RNA into the large ribosomal subunit, where it forms part of the central protuberance. In the 70S ribosome it contacts protein S13 of the 30S subunit (bridge B1b), connecting the 2 subunits; this bridge is implicated in subunit movement. Contacts the P site tRNA; the 5S rRNA and some of its associated proteins might help stabilize positioning of ribosome-bound tRNAs. The sequence is that of Large ribosomal subunit protein uL5 from Leptospira interrogans serogroup Icterohaemorrhagiae serovar copenhageni (strain Fiocruz L1-130).